Consider the following 158-residue polypeptide: uncharacterized protein (158 aa).

Positions 12 to 73 (LDEIDRAILR…LINPFKAGYE (62 aa)) constitute an HTH asnC-type domain. The H-T-H motif DNA-binding region spans 31–50 (YSEISRRINVPESTVRARVN).

This is an uncharacterized protein from Pyrococcus abyssi (strain GE5 / Orsay).